Here is a 205-residue protein sequence, read N- to C-terminus: Outer-membrane lipoprotein LolB (205 aa).

The N-terminal stretch at 1-17 is a signal peptide; the sequence is MFLRHVIVFSLIALLTG. A lipid anchor (N-palmitoyl cysteine) is attached at cysteine 18. Cysteine 18 carries S-diacylglycerol cysteine lipidation.

The protein belongs to the LolB family. As to quaternary structure, monomer.

The protein resides in the cell outer membrane. Its function is as follows. Plays a critical role in the incorporation of lipoproteins in the outer membrane after they are released by the LolA protein. This is Outer-membrane lipoprotein LolB from Pseudomonas savastanoi pv. phaseolicola (strain 1448A / Race 6) (Pseudomonas syringae pv. phaseolicola (strain 1448A / Race 6)).